Consider the following 267-residue polypeptide: MASSSLLLACVVVAAMVSAVSCGPPKVPPGPNITTSYGDKWLEAKATWYGAPKGAGPKDNGGACGYKDVDKAPFLGMNSCGNDPIFKDGKGCGSCFEIKCSKPEACSDKPALIHVTDMNDEPIAAYHFDLSGLAFGAMAKDGKDEELRKAGIIDTQFRRVKCKYPADTKITFHIEKASNPNYLALLVKYVAGDGDVVEVEIKEKGSEEWKALKESWGAIWRIDTPKPLKGPFSVRVTTEGGEKIIAEDAIPDGWKADSVYKSNVQAK.

The first 22 residues, 1–22, serve as a signal peptide directing secretion; the sequence is MASSSLLLACVVVAAMVSAVSC. Asparagine 32 carries N-linked (GlcNAc...) asparagine glycosylation. The Expansin-like EG45 domain occupies 61–167; that stretch reads GGACGYKDVD…RRVKCKYPAD (107 aa). Cystine bridges form between cysteine 64-cysteine 92, cysteine 95-cysteine 162, and cysteine 100-cysteine 106. The 82-residue stretch at 181–262 folds into the Expansin-like CBD domain; that stretch reads NYLALLVKYV…GWKADSVYKS (82 aa).

The protein belongs to the expansin family. Expansin B subfamily. In terms of tissue distribution, expressed in mature anthers but not in vegetative or other floral tissues.

It is found in the secreted. Its subcellular location is the cell wall. It localises to the membrane. Its function is as follows. May cause loosening and extension of plant cell walls by disrupting non-covalent bonding between cellulose microfibrils and matrix glucans. No enzymatic activity has been found. May be required for rapid internodal elongation in deepwater rice during submergence. This Oryza sativa subsp. japonica (Rice) protein is Expansin-B1 (EXPB1a).